Consider the following 542-residue polypeptide: CTP synthase (542 aa).

Positions 1-265 (MTRFIFITGG…DVQVCRHFHL (265 aa)) are amidoligase domain. CTP is bound at residue Ser13. Position 13 (Ser13) interacts with UTP. ATP-binding positions include 14–19 (SLGKGL) and Asp71. Mg(2+) is bound by residues Asp71 and Glu139. CTP-binding positions include 146 to 148 (DIE), 186 to 191 (KTKPTQ), and Lys222. Residues 186–191 (KTKPTQ) and Lys222 contribute to the UTP site. The 251-residue stretch at 291–541 (TIAVVGKYTS…VQAAITQSRL (251 aa)) folds into the Glutamine amidotransferase type-1 domain. Gly353 contacts L-glutamine. Cys380 serves as the catalytic Nucleophile; for glutamine hydrolysis. L-glutamine contacts are provided by residues 381–384 (FGMQ), Glu404, and Arg469. Active-site residues include His514 and Glu516.

It belongs to the CTP synthase family. As to quaternary structure, homotetramer.

The enzyme catalyses UTP + L-glutamine + ATP + H2O = CTP + L-glutamate + ADP + phosphate + 2 H(+). It carries out the reaction L-glutamine + H2O = L-glutamate + NH4(+). It catalyses the reaction UTP + NH4(+) + ATP = CTP + ADP + phosphate + 2 H(+). Its pathway is pyrimidine metabolism; CTP biosynthesis via de novo pathway; CTP from UDP: step 2/2. Allosterically activated by GTP, when glutamine is the substrate; GTP has no effect on the reaction when ammonia is the substrate. The allosteric effector GTP functions by stabilizing the protein conformation that binds the tetrahedral intermediate(s) formed during glutamine hydrolysis. Inhibited by the product CTP, via allosteric rather than competitive inhibition. Catalyzes the ATP-dependent amination of UTP to CTP with either L-glutamine or ammonia as the source of nitrogen. Regulates intracellular CTP levels through interactions with the four ribonucleotide triphosphates. This is CTP synthase from Rhodospirillum rubrum (strain ATCC 11170 / ATH 1.1.1 / DSM 467 / LMG 4362 / NCIMB 8255 / S1).